The primary structure comprises 212 residues: Thymidylate kinase (212 aa).

10 to 17 (GLEGAGKT) is a binding site for ATP.

It belongs to the thymidylate kinase family.

It carries out the reaction dTMP + ATP = dTDP + ADP. Functionally, phosphorylation of dTMP to form dTDP in both de novo and salvage pathways of dTTP synthesis. This is Thymidylate kinase from Yersinia enterocolitica serotype O:8 / biotype 1B (strain NCTC 13174 / 8081).